Reading from the N-terminus, the 575-residue chain is Epsin-1 (575 aa).

Residues arginine 8, lysine 11, arginine 25, asparagine 30, arginine 63, and histidine 73 each contribute to the a 1,2-diacyl-sn-glycero-3-phospho-(1D-myo-inositol-4,5-bisphosphate) site. In terms of domain architecture, ENTH spans 12–144; the sequence is NIVHNYSEAE…RDEDRLREER (133 aa). The tract at residues 149–186 is disordered; that stretch reads KTKEKLAQTATASSAAVGSGPPPEAEQAWPQSSGEEEL. The segment covering 157–167 has biased composition (low complexity); it reads TATASSAAVGS. UIM domains lie at 183 to 202, 208 to 227, and 233 to 252; these read EEEL…ADQP, EDDV…HDKE, and GDDL…TGGK. Disordered stretches follow at residues 264-283 and 293-575; these read FTTP…ASVP and SDPW…PFLL. A run of 8 repeats spans residues 274–276, 294–296, 306–308, 319–321, 332–334, 349–351, 367–369, and 377–379. Residues 274–379 are 8 X 3 AA repeats of D-P-W; it reads DPWGGPASVP…APAPAFSDPW (106 aa). Low complexity predominate over residues 306–316; the sequence is DPWGGAAPTPA. Positions 333-346 are enriched in low complexity; it reads PWGGTPAPAAGEGP. Low complexity predominate over residues 367–379; the sequence is DPWAPAPAFSDPW. Serine 382 bears the Phosphoserine mark. The [DE]-X(1,2)-F-X-X-[FL]-X-X-X-R motif motif lies at 401–410; sequence DEFSDFDRLR. Residues serine 418 and serine 419 each carry the phosphoserine modification. Threonine 420 bears the Phosphothreonine mark. Serine 434, serine 446, and serine 453 each carry phosphoserine. Pro residues predominate over residues 453–467; sequence SPPPAATPTPTPPTR. A phosphothreonine mark is found at threonine 459, threonine 463, and threonine 469. The residue at position 472 (serine 472) is a Phosphoserine. Threonine 493 carries the post-translational modification Phosphothreonine. 2 repeat units span residues 501 to 503 and 517 to 519. The segment at 501 to 573 is 3 X 3 AA repeats of N-P-F; sequence NPFLPSGAPA…GPPAPNTNPF (73 aa). Residue arginine 533 is modified to Omega-N-methylarginine. Residues 556-569 are compositionally biased toward pro residues; that stretch reads GLPPMMPPGPPAPN. Residues 571 to 573 form repeat 3; it reads NPF.

This sequence belongs to the epsin family. As to quaternary structure, monomer. Binds ITSN1. Binds clathrin, ZBTB16/ZNF145, AP2A1 and AP2A2. Binds ubiquitinated proteins. Interacts with RALBP1 in a complex also containing NUMB and TFAP2A during interphase and mitosis. Interacts with AP2B1. Interacts with UBQLN2. Interacts with REPS2; the interaction is direct. Interacts with EPS15; the interaction is direct. Interacts with ENTREP1. In terms of processing, ubiquitinated. Phosphorylated on serine and/or threonine residues in mitotic cells. Phosphorylation reduces interaction with REPS2, AP-2 and the membrane fraction. Depolarization of synaptosomes results in dephosphorylation. In terms of tissue distribution, ubiquitously expressed. Detected in liver, spleen and testis, and weakly in lung and thymus (at protein level).

Its subcellular location is the cytoplasm. It is found in the cell membrane. The protein resides in the nucleus. It localises to the membrane. The protein localises to the clathrin-coated pit. In terms of biological role, binds to membranes enriched in phosphatidylinositol 4,5-bisphosphate (PtdIns(4,5)P2). Modifies membrane curvature and facilitates the formation of clathrin-coated invaginations. Regulates receptor-mediated endocytosis. This is Epsin-1 (Epn1) from Rattus norvegicus (Rat).